The following is a 493-amino-acid chain: Glutamyl-tRNA(Gln) amidotransferase subunit A (493 aa).

Active-site charge relay system residues include lysine 79 and serine 159. The Acyl-ester intermediate role is filled by serine 183.

This sequence belongs to the amidase family. GatA subfamily. As to quaternary structure, heterotrimer of A, B and C subunits.

The catalysed reaction is L-glutamyl-tRNA(Gln) + L-glutamine + ATP + H2O = L-glutaminyl-tRNA(Gln) + L-glutamate + ADP + phosphate + H(+). Its function is as follows. Allows the formation of correctly charged Gln-tRNA(Gln) through the transamidation of misacylated Glu-tRNA(Gln) in organisms which lack glutaminyl-tRNA synthetase. The reaction takes place in the presence of glutamine and ATP through an activated gamma-phospho-Glu-tRNA(Gln). The sequence is that of Glutamyl-tRNA(Gln) amidotransferase subunit A from Rhizobium leguminosarum bv. trifolii (strain WSM2304).